We begin with the raw amino-acid sequence, 357 residues long: tRNA N6-adenosine threonylcarbamoyltransferase (357 aa).

Fe cation contacts are provided by H115 and H119. Residues 137-141 (LASGG), D170, G183, and N281 each bind substrate. Fe cation is bound at residue D309.

The protein belongs to the KAE1 / TsaD family. It depends on Fe(2+) as a cofactor.

The protein resides in the cytoplasm. The enzyme catalyses L-threonylcarbamoyladenylate + adenosine(37) in tRNA = N(6)-L-threonylcarbamoyladenosine(37) in tRNA + AMP + H(+). Its function is as follows. Required for the formation of a threonylcarbamoyl group on adenosine at position 37 (t(6)A37) in tRNAs that read codons beginning with adenine. Is involved in the transfer of the threonylcarbamoyl moiety of threonylcarbamoyl-AMP (TC-AMP) to the N6 group of A37, together with TsaE and TsaB. TsaD likely plays a direct catalytic role in this reaction. The polypeptide is tRNA N6-adenosine threonylcarbamoyltransferase (Bradyrhizobium diazoefficiens (strain JCM 10833 / BCRC 13528 / IAM 13628 / NBRC 14792 / USDA 110)).